We begin with the raw amino-acid sequence, 258 residues long: Acyl-[acyl-carrier-protein]--UDP-N-acetylglucosamine O-acyltransferase (258 aa).

This sequence belongs to the transferase hexapeptide repeat family. LpxA subfamily. In terms of assembly, homotrimer.

The protein localises to the cytoplasm. It catalyses the reaction a (3R)-hydroxyacyl-[ACP] + UDP-N-acetyl-alpha-D-glucosamine = a UDP-3-O-[(3R)-3-hydroxyacyl]-N-acetyl-alpha-D-glucosamine + holo-[ACP]. It participates in glycolipid biosynthesis; lipid IV(A) biosynthesis; lipid IV(A) from (3R)-3-hydroxytetradecanoyl-[acyl-carrier-protein] and UDP-N-acetyl-alpha-D-glucosamine: step 1/6. Functionally, involved in the biosynthesis of lipid A, a phosphorylated glycolipid that anchors the lipopolysaccharide to the outer membrane of the cell. This is Acyl-[acyl-carrier-protein]--UDP-N-acetylglucosamine O-acyltransferase from Syntrophobacter fumaroxidans (strain DSM 10017 / MPOB).